The sequence spans 434 residues: ATP-dependent protease ATPase subunit HslU (434 aa).

ATP contacts are provided by residues I18, 60–65, D247, E312, and R384; that span reads GVGKTE.

Belongs to the ClpX chaperone family. HslU subfamily. As to quaternary structure, a double ring-shaped homohexamer of HslV is capped on each side by a ring-shaped HslU homohexamer. The assembly of the HslU/HslV complex is dependent on binding of ATP.

The protein resides in the cytoplasm. Functionally, ATPase subunit of a proteasome-like degradation complex; this subunit has chaperone activity. The binding of ATP and its subsequent hydrolysis by HslU are essential for unfolding of protein substrates subsequently hydrolyzed by HslV. HslU recognizes the N-terminal part of its protein substrates and unfolds these before they are guided to HslV for hydrolysis. This Brucella ovis (strain ATCC 25840 / 63/290 / NCTC 10512) protein is ATP-dependent protease ATPase subunit HslU.